Consider the following 361-residue polypeptide: Chorismate synthase (361 aa).

Residue R48 coordinates NADP(+). FMN contacts are provided by residues 126-128 (RSS), G269, 302-306 (KPVPS), and N328.

Belongs to the chorismate synthase family. In terms of assembly, homotetramer. It depends on FMNH2 as a cofactor.

It catalyses the reaction 5-O-(1-carboxyvinyl)-3-phosphoshikimate = chorismate + phosphate. It functions in the pathway metabolic intermediate biosynthesis; chorismate biosynthesis; chorismate from D-erythrose 4-phosphate and phosphoenolpyruvate: step 7/7. Its function is as follows. Catalyzes the anti-1,4-elimination of the C-3 phosphate and the C-6 proR hydrogen from 5-enolpyruvylshikimate-3-phosphate (EPSP) to yield chorismate, which is the branch point compound that serves as the starting substrate for the three terminal pathways of aromatic amino acid biosynthesis. This reaction introduces a second double bond into the aromatic ring system. The polypeptide is Chorismate synthase (Treponema denticola (strain ATCC 35405 / DSM 14222 / CIP 103919 / JCM 8153 / KCTC 15104)).